Here is a 304-residue protein sequence, read N- to C-terminus: MLLSAVISFIGFAAFLQEANGHVVERADSRKPIWDIAHMVNDLDLVDEYLGDGANALEADLAFTSDGTADEMYHGVPCDCFRSCTRSEKFSTYMDYIRRITTPGSSNFRPQMLLLIIDLKLKGIEPNVAYAAGKSTAKKLLSSYWQDGKSGARAYIVLSLETITRQDFISGFKDAIDASGHTELYEKIGWDFSGNEDLGEIRRIYQKYGIDDHIWQGDGITNCWVRDDDRLKEAIKKKNDPNYKYTKKVYTWSIDKNASIRNALRLGVDAIMTNYPEDVKDILQESEFSGYLRMATYDDNPWVK.

An N-terminal signal peptide occupies residues 1–21 (MLLSAVISFIGFAAFLQEANG). A propeptide spanning residues 22–26 (HVVER) is cleaved from the precursor. Histidine 38 is an active-site residue. Residues glutamate 58 and aspartate 60 each coordinate Mg(2+). Catalysis depends on histidine 74, which acts as the Nucleophile. 2 cysteine pairs are disulfide-bonded: cysteine 78–cysteine 84 and cysteine 80–cysteine 223. Aspartate 118 is a Mg(2+) binding site.

This sequence belongs to the arthropod phospholipase D family. Class II subfamily. Class IIb sub-subfamily. Mg(2+) is required as a cofactor. In terms of tissue distribution, expressed by the venom gland.

Its subcellular location is the secreted. The enzyme catalyses an N-(acyl)-sphingosylphosphocholine = an N-(acyl)-sphingosyl-1,3-cyclic phosphate + choline. It catalyses the reaction an N-(acyl)-sphingosylphosphoethanolamine = an N-(acyl)-sphingosyl-1,3-cyclic phosphate + ethanolamine. The catalysed reaction is a 1-acyl-sn-glycero-3-phosphocholine = a 1-acyl-sn-glycero-2,3-cyclic phosphate + choline. It carries out the reaction a 1-acyl-sn-glycero-3-phosphoethanolamine = a 1-acyl-sn-glycero-2,3-cyclic phosphate + ethanolamine. Dermonecrotic toxins cleave the phosphodiester linkage between the phosphate and headgroup of certain phospholipids (sphingolipid and lysolipid substrates), forming an alcohol (often choline) and a cyclic phosphate. This toxin acts on sphingomyelin (SM) with low activity. It may also act on ceramide phosphoethanolamine (CPE), lysophosphatidylcholine (LPC) and lysophosphatidylethanolamine (LPE), but not on lysophosphatidylserine (LPS), and lysophosphatidylglycerol (LPG). It acts by transphosphatidylation, releasing exclusively cyclic phosphate products as second products. Induces hemolysis, dermonecrosis, and edema. Also induces platelet aggregation. This is Dermonecrotic toxin LlSicTox-betaIA1 from Loxosceles laeta (South American recluse spider).